A 361-amino-acid polypeptide reads, in one-letter code: Histidinol-phosphate aminotransferase (361 aa).

At Lys-220 the chain carries N6-(pyridoxal phosphate)lysine.

It belongs to the class-II pyridoxal-phosphate-dependent aminotransferase family. Histidinol-phosphate aminotransferase subfamily. As to quaternary structure, homodimer. Pyridoxal 5'-phosphate is required as a cofactor.

The enzyme catalyses L-histidinol phosphate + 2-oxoglutarate = 3-(imidazol-4-yl)-2-oxopropyl phosphate + L-glutamate. Its pathway is amino-acid biosynthesis; L-histidine biosynthesis; L-histidine from 5-phospho-alpha-D-ribose 1-diphosphate: step 7/9. This chain is Histidinol-phosphate aminotransferase, found in Syntrophus aciditrophicus (strain SB).